Consider the following 286-residue polypeptide: tRNA pseudouridine synthase A (286 aa).

Asp-60 acts as the Nucleophile in catalysis. Tyr-132 contributes to the substrate binding site.

This sequence belongs to the tRNA pseudouridine synthase TruA family. Homodimer.

It catalyses the reaction uridine(38/39/40) in tRNA = pseudouridine(38/39/40) in tRNA. Functionally, formation of pseudouridine at positions 38, 39 and 40 in the anticodon stem and loop of transfer RNAs. This Mycobacterium leprae (strain TN) protein is tRNA pseudouridine synthase A.